The primary structure comprises 775 residues: Protein U58 (775 aa).

This sequence belongs to the herpesviridae UL87 family.

This Homo sapiens (Human) protein is Protein U58 (U58).